A 408-amino-acid chain; its full sequence is BRCA1-A complex subunit Abraxas 1 (408 aa).

The MPN domain maps to 7–155 (TAVISGFVFG…KSTHRLEYAL (149 aa)). Positions 210-272 (ALAEVNRISD…MEEKGNKVSE (63 aa)) form a coiled coil. The disordered stretch occupies residues 335–408 (HRRQAGKRKA…EVSRSKSPTF (74 aa)). A compositionally biased stretch (basic residues) spans 337 to 358 (RQAGKRKAHSKQLGKTSTKKSR). Residues 394–408 (QSLNVEVSRSKSPTF) are compositionally biased toward polar residues. S405 is modified (phosphoserine). Residues 405-408 (SPTF) carry the pSXXF motif motif.

Belongs to the FAM175 family. Abraxas subfamily. Component of the BRCA1-A complex. Component of the BRISC complex. Homodimer. Interacts directly (when phosphorylated at Ser-405) with brca1. The phosphorylated homodimer can interact directly with two brca1 chains, giving rise to a heterotetramer. In terms of processing, phosphorylation of Ser-405 of the pSXXF motif by ATM or ATR constitutes a specific recognition motif for the BRCT domain of BRCA1.

It is found in the nucleus. Involved in DNA damage response and double-strand break (DSB) repair. Component of the BRCA1-A complex, acting as a central scaffold protein that assembles the various components of the complex and mediates the recruitment of brca1. The BRCA1-A complex specifically recognizes 'Lys-63'-linked ubiquitinated histones H2A and H2AX at DNA lesion sites, leading to target the brca1-bard1 heterodimer to sites of DNA damage at DSBs. This complex also possesses deubiquitinase activity that specifically removes 'Lys-63'-linked ubiquitin on histones H2A and H2AX. The polypeptide is BRCA1-A complex subunit Abraxas 1 (Xenopus laevis (African clawed frog)).